The sequence spans 333 residues: DNA repair and recombination protein RadA (333 aa).

ATP is bound at residue 127–134; it reads GEFGSGKT.

Belongs to the eukaryotic RecA-like protein family.

Its function is as follows. Involved in DNA repair and in homologous recombination. Binds and assemble on single-stranded DNA to form a nucleoprotein filament. Hydrolyzes ATP in a ssDNA-dependent manner and promotes DNA strand exchange between homologous DNA molecules. In Pyrobaculum arsenaticum (strain DSM 13514 / JCM 11321 / PZ6), this protein is DNA repair and recombination protein RadA.